Here is a 216-residue protein sequence, read N- to C-terminus: Ras-related protein RABA1b (216 aa).

Residue 20-27 (GDSGVGKS) participates in GTP binding. Residues 42-50 (SKSTIGVEF) carry the Effector region motif. GTP contacts are provided by residues 68-72 (DTAGQ), 126-129 (NKSD), and 156-157 (SA). 2 S-geranylgeranyl cysteine lipidation sites follow: C213 and C214.

This sequence belongs to the small GTPase superfamily. Rab family.

Its subcellular location is the cell membrane. Intracellular vesicle trafficking and protein transport. The chain is Ras-related protein RABA1b (RABA1B) from Arabidopsis thaliana (Mouse-ear cress).